A 239-amino-acid chain; its full sequence is Phosphoribosylaminoimidazole-succinocarboxamide synthase (239 aa).

Belongs to the SAICAR synthetase family.

The enzyme catalyses 5-amino-1-(5-phospho-D-ribosyl)imidazole-4-carboxylate + L-aspartate + ATP = (2S)-2-[5-amino-1-(5-phospho-beta-D-ribosyl)imidazole-4-carboxamido]succinate + ADP + phosphate + 2 H(+). Its pathway is purine metabolism; IMP biosynthesis via de novo pathway; 5-amino-1-(5-phospho-D-ribosyl)imidazole-4-carboxamide from 5-amino-1-(5-phospho-D-ribosyl)imidazole-4-carboxylate: step 1/2. In Bacillus cereus (strain B4264), this protein is Phosphoribosylaminoimidazole-succinocarboxamide synthase.